An 87-amino-acid polypeptide reads, in one-letter code: Phosphocarrier protein HPr (87 aa).

The HPr domain maps to 1–87; the sequence is MASKDFHIVA…AETMTKEGLA (87 aa). The Pros-phosphohistidine intermediate role is filled by His15. A Phosphoserine; by HPrK/P modification is found at Ser46.

The protein belongs to the HPr family.

It localises to the cytoplasm. Its activity is regulated as follows. Phosphorylation on Ser-46 inhibits the phosphoryl transfer from enzyme I to HPr. Its function is as follows. General (non sugar-specific) component of the phosphoenolpyruvate-dependent sugar phosphotransferase system (sugar PTS). This major carbohydrate active-transport system catalyzes the phosphorylation of incoming sugar substrates concomitantly with their translocation across the cell membrane. The phosphoryl group from phosphoenolpyruvate (PEP) is transferred to the phosphoryl carrier protein HPr by enzyme I. Phospho-HPr then transfers it to the PTS EIIA domain. P-Ser-HPr interacts with the catabolite control protein A (CcpA), forming a complex that binds to DNA at the catabolite response elements cre, operator sites preceding a large number of catabolite-regulated genes. Thus, P-Ser-HPr is a corepressor in carbon catabolite repression (CCR), a mechanism that allows bacteria to coordinate and optimize the utilization of available carbon sources. P-Ser-HPr also plays a role in inducer exclusion, in which it probably interacts with several non-PTS permeases and inhibits their transport activity. The sequence is that of Phosphocarrier protein HPr (ptsH) from Streptococcus salivarius.